Consider the following 484-residue polypeptide: Serine/arginine-rich splicing factor 11 (484 aa).

A disordered region spans residues 1–33; the sequence is MSNTTVVPSTAGPGPSGGPGGGGGGGGGGGGTE. Residue Ser2 is modified to N-acetylserine. The segment covering 14–32 has biased composition (gly residues); that stretch reads GPSGGPGGGGGGGGGGGGT. An RRM domain is found at 33 to 113; sequence EVIQVTNVSP…ALIVVPYAEG (81 aa). Lys197 participates in a covalent cross-link: Glycyl lysine isopeptide (Lys-Gly) (interchain with G-Cter in SUMO2). The residue at position 207 (Ser207) is a Phosphoserine. Lys211 is covalently cross-linked (Glycyl lysine isopeptide (Lys-Gly) (interchain with G-Cter in SUMO2)). Ser212 carries the post-translational modification Phosphoserine. The interval 233–484 is disordered; sequence ISAAIEPDKK…HHEEDMDMSD (252 aa). Positions 244–308 are enriched in basic residues; that stretch reads EKRRHSRSRS…ERGRRSRSTS (65 aa). 10 consecutive repeat copies span residues 247–255, 258–265, 267–274, 275–282, 285–292, 293–300, 302–309, 321–328, 334–341, and 346–353. The 10 X 8 AA approximate repeats of R-R-S-R-S-R-S-R stretch occupies residues 247 to 353; sequence RHSRSRSRSR…RRRRSRSGTR (107 aa). A compositionally biased stretch (basic and acidic residues) spans 309–320; it reads KTRDKKKEDKEK. Residue Ser323 is modified to Phosphoserine. At Thr325 the chain carries Phosphothreonine. A compositionally biased stretch (basic residues) spans 334–379; sequence RRSRSASRERRRRRSRSGTRSPKKPRSPKRKLSRSPSPRRHKKEKK. Composition is skewed to basic and acidic residues over residues 380–395, 402–424, and 433–478; these read KDKD…ERST, KDKE…VTRD, and DSEK…HHEE. A phosphoserine mark is found at Ser414 and Ser434. Position 447 is a phosphothreonine (Thr447). Phosphoserine is present on residues Ser449, Ser456, Ser464, and Ser483.

The protein belongs to the splicing factor SR family. In terms of assembly, interacts with PUF60.

It is found in the nucleus. Functionally, may function in pre-mRNA splicing. The polypeptide is Serine/arginine-rich splicing factor 11 (SRSF11) (Homo sapiens (Human)).